The sequence spans 805 residues: Replication restart protein PriA (805 aa).

The 3'BD stretch occupies residues 1–110; the sequence is MNFAEVIVDV…QAMLPAALKA (110 aa). The tract at residues 111 to 166 is linker; that stretch reads KYEKELKIAHGADLPPQVERLFSETKTLLYSDIPDHETLKLIQRHVQKGDIDVTYK. Residues 167–253 form a WH region; sequence VAQKTNKKMV…KESYEEVYRD (87 aa). In terms of domain architecture, Helicase ATP-binding spans 282 to 448; sequence TLDSDEHKVF…QKGVYELLSL (167 aa). 295–302 lines the ATP pocket; sequence GVTGSGKT. The short motif at 391–394 is the DEAH box element; it reads DEEH. Zn(2+) is bound by residues C510, C513, C519, C522, C537, C540, C550, and C553. A Helicase C-terminal domain is found at 545–699; the sequence is PVPHTCPECA…TFYQHEMAHR (155 aa).

The protein belongs to the helicase family. PriA subfamily. In terms of assembly, monomer. Component of the replication restart primosome which assembles in this order; PriA, DnaD then DnaB. The preferred DNA substrate mimics an arrested DNA replication fork with unreplicated lagging strand. Interacts with DnaD but not DnaB. Interacts with SSB (sbbA) via the latter's 35 residue C-terminal tail which tethers PriA to ssDNA. Colocalizes with DNA pol III subunit gamma/tau (dnaX). May interact with RarA. Requires Zn(2+) as cofactor.

The protein resides in the cytoplasm. It localises to the nucleoid. The catalysed reaction is Couples ATP hydrolysis with the unwinding of duplex DNA by translocating in the 3'-5' direction.. It carries out the reaction ATP + H2O = ADP + phosphate + H(+). Initiates the restart of stalled replication forks, which reloads the replicative helicase on sites other than the origin of replication. Recognizes and binds to abandoned replication forks and remodels them to uncover a helicase loading site. Promotes assembly of the primosome at these replication forks. Serves as the initiating protein for assembly of the replication restart primosome; binding of PriA to an arrested DNA replication fork with unreplicated lagging strand triggers assembly. Sequentially DnaD (possibly as a dimer) and DnaB homotetramers bind. Assembly probably continues by loading of the DnaC replicative helicase aided by helicase loader DnaI. A single-strand (ss)DNA-dependent ATPase with helicase activity. Recognizes and binds the arrested nascent DNA chain at stalled replication forks. Binds forked DNA substrates and makes a larger complex with RarA; RarA has no effect on the helicase function. Binds ssDNA, D-loops and replication fork-like substrates but not double-stranded (ds)DNA; the preferred DNA substrate mimics an arrested DNA replication fork with an unreplicated lagging strand. Recognizes nicked dsDNA. A supershift on ssDNA occurs in the presence of single-stranded binding protein (SSB). Cannot substitute for E.coli PriA. Its function is as follows. Required for replication of plasmids that have a rolling circle mechanism, which produces circular single-stranded (ss)DNA intermediates corresponding to the lagging strand template, which are then converted into double-stranded (ds)DNA; priA is required to activate the conversion of ssDNA into dsDNA. The chain is Replication restart protein PriA from Bacillus subtilis (strain 168).